A 205-amino-acid polypeptide reads, in one-letter code: Spermatogenesis-associated protein 24 (205 aa).

The stretch at 17–167 (LAFDQLRDVI…QKQNFRNHIS (151 aa)) forms a coiled coil. The interval 138-185 (EDILNGKENEIKELQQVISQQKQNFRNHISDFRIQKQQETYMAQVLDQ) is required for interaction with CBX5 and TBPL1. The tract at residues 185–205 (QKRKKATGMRRARSRQCSREK) is disordered. A compositionally biased stretch (basic residues) spans 186–205 (KRKKATGMRRARSRQCSREK).

Belongs to the SPATA24 family. Homodimer. Interacts with CBX3, CBX5, GMNN, GTF2B, TBPL1 and the polycomb proteins PHCF2, RNF2 and SCMH1 but not with CBX1 or PCGF2. Testis-specific (at protein level).

It is found in the cytoplasm. The protein localises to the nucleus. It localises to the nucleolus. The protein resides in the nucleoplasm. Binds DNA with high affinity but does not bind to TATA boxes. Synergises with GMNN and TBP in activation of TATA box-containing promoters and with GMNN and TBPL1 in activation of the NF1 TATA-less promoter. May play a role in cytoplasm movement and removal during spermiogenesis. This chain is Spermatogenesis-associated protein 24 (Spata24), found in Mus musculus (Mouse).